Here is an 87-residue protein sequence, read N- to C-terminus: uncharacterized protein (87 aa).

A helical transmembrane segment spans residues 29–49 (ILWMIIFVVIIAVIIYILISP).

The protein localises to the membrane. This is an uncharacterized protein from Methanocaldococcus jannaschii (strain ATCC 43067 / DSM 2661 / JAL-1 / JCM 10045 / NBRC 100440) (Methanococcus jannaschii).